The chain runs to 90 residues: Small ribosomal subunit protein uS15c (90 aa).

Belongs to the universal ribosomal protein uS15 family. Part of the 30S ribosomal subunit.

The protein resides in the plastid. Its subcellular location is the chloroplast. This Lolium perenne (Perennial ryegrass) protein is Small ribosomal subunit protein uS15c (rps15-A).